The primary structure comprises 248 residues: Probable S-methyl-5'-thioinosine phosphorylase (248 aa).

Residues T12 and 54-55 contribute to the phosphate site; that span reads RH. M187 contacts substrate. Residue T188 participates in phosphate binding. Residue 211 to 213 participates in substrate binding; that stretch reads NWA.

It belongs to the PNP/MTAP phosphorylase family. MTAP subfamily. In terms of assembly, homotrimer.

The catalysed reaction is S-methyl-5'-thioinosine + phosphate = 5-(methylsulfanyl)-alpha-D-ribose 1-phosphate + hypoxanthine. It functions in the pathway purine metabolism; purine nucleoside salvage. Catalyzes the reversible phosphorylation of S-methyl-5'-thioinosine (MTI) to hypoxanthine and 5-methylthioribose-1-phosphate. Involved in the breakdown of S-methyl-5'-thioadenosine (MTA), a major by-product of polyamine biosynthesis. Catabolism of (MTA) occurs via deamination to MTI and phosphorolysis to hypoxanthine. This Xylella fastidiosa (strain Temecula1 / ATCC 700964) protein is Probable S-methyl-5'-thioinosine phosphorylase.